The sequence spans 1191 residues: DNA topoisomerase 2 (1191 aa).

Residues asparagine 64, asparagine 95, and 142 to 149 (GTNGVGLK) contribute to the ATP site. Glutamate 437, aspartate 538, and aspartate 540 together coordinate Mg(2+). The region spanning 706-1173 (IPNFLDGMTR…PGASVWLEEI (468 aa)) is the Topo IIA-type catalytic domain. Tyrosine 799 functions as the O-(5'-phospho-DNA)-tyrosine intermediate in the catalytic mechanism.

This sequence belongs to the type II topoisomerase family. Mg(2+) is required as a cofactor. Mn(2+) serves as cofactor. The cofactor is Ca(2+).

It localises to the host cytoplasm. The catalysed reaction is ATP-dependent breakage, passage and rejoining of double-stranded DNA.. Type II topoisomerase. Processively relaxes supercoiled DNA. Displays DNA-supercoiling activity only when associated with the viral histone-like protein. The sequence is that of DNA topoisomerase 2 from Ornithodoros (relapsing fever ticks).